The following is a 1178-amino-acid chain: F-box/WD repeat-containing protein A-like protein (1178 aa).

An START domain is found at 1–208 (MQYVNGMDIV…TLPNLIKYIK (208 aa)). 3 disordered regions span residues 223-296 (KTPD…NLNE), 569-594 (SLII…DNGI), and 618-649 (SSSS…STFS). Composition is skewed to low complexity over residues 229 to 293 (NPNL…SNEN) and 571 to 580 (IINSPPNSNN). An F-box domain is found at 717 to 763 (CSLFDLLPYEMIQYIFTLMDATHLIRMSRTCKYFNRICLDDNIWRDL). The interval 804–841 (KKSNNSSPLSASSSSSSPSPPLLPPPPPPIPQLPDMLL) is disordered. Residues 809–820 (SSPLSASSSSSS) are compositionally biased toward low complexity. Positions 821 to 835 (PSPPLLPPPPPPIPQ) are enriched in pro residues. 7 WD repeats span residues 886 to 923 (GHKG…CEST), 925 to 979 (RCGA…IEKE), 981 to 1017 (RFLY…ELQM), 1020 to 1059 (IENT…TELV), 1062 to 1100 (GHKG…SAIH), 1104 to 1141 (SHSS…EPNL), and 1146 to 1178 (NNLS…FNSK).

Substrate recognition component of a SCF (SKP1-CUL1-F-box protein) E3 ubiquitin-protein ligase complex which mediates the ubiquitination and subsequent proteasomal degradation of target proteins. This chain is F-box/WD repeat-containing protein A-like protein, found in Dictyostelium discoideum (Social amoeba).